The following is a 655-amino-acid chain: tRNA uridine 5-carboxymethylaminomethyl modification enzyme MnmG (655 aa).

13–18 (GGGHAG) contributes to the FAD binding site. Residue 281-295 (GPRYCPSVEDKINRF) participates in NAD(+) binding.

Belongs to the MnmG family. As to quaternary structure, homodimer. Heterotetramer of two MnmE and two MnmG subunits. FAD is required as a cofactor.

The protein resides in the cytoplasm. Functionally, NAD-binding protein involved in the addition of a carboxymethylaminomethyl (cmnm) group at the wobble position (U34) of certain tRNAs, forming tRNA-cmnm(5)s(2)U34. The polypeptide is tRNA uridine 5-carboxymethylaminomethyl modification enzyme MnmG (Paracidovorax citrulli (strain AAC00-1) (Acidovorax citrulli)).